We begin with the raw amino-acid sequence, 107 residues long: Nucleoid-associated protein BMEA_A0033 (107 aa).

Belongs to the YbaB/EbfC family. Homodimer.

The protein resides in the cytoplasm. It localises to the nucleoid. In terms of biological role, binds to DNA and alters its conformation. May be involved in regulation of gene expression, nucleoid organization and DNA protection. This chain is Nucleoid-associated protein BMEA_A0033, found in Brucella melitensis biotype 2 (strain ATCC 23457).